A 651-amino-acid chain; its full sequence is J domain-containing protein required for chloroplast accumulation response 1 (651 aa).

Residues 1-17 (MQTLPSSETVLLGSNSA) are compositionally biased toward polar residues. Disordered regions lie at residues 1–56 (MQTL…TRHS), 114–138 (GSRI…QFSL), 156–176 (LNKN…SKAD), 250–291 (KLGK…TDLK), and 308–526 (KPLD…IDEP). Ser-56 is subject to Phosphoserine. Positions 126 to 137 (SSSGTSSPSQFS) are enriched in low complexity. 6 stretches are compositionally biased toward basic and acidic residues: residues 250 to 259 (KLGKNEEGDG), 281 to 291 (TKEEKTETDLK), 337 to 357 (IFHE…EVRK), 405 to 416 (VGKDGVKGKVSD), 441 to 456 (RAKE…DGSN), and 488 to 497 (QKKDSDRESM). Positions 532–562 (DVEDITQDENKMEEANKDAEEIKNIDAKIRK) form a coiled coil. In terms of domain architecture, J spans 586–651 (SGWKPVPLMD…WDHFNTLGPV (66 aa)).

In terms of tissue distribution, expressed in leaves and stems, but not in roots.

It is found in the cytoplasm. Required for chloroplast photorelocation movement; chloroplast accumulation upon low blue light and for chloroplast movement to the bottom of cells in darkness, by modulating chloroplast actin (Cp-actin) filaments distribution, appearance and disappearance. May mediate a slight resistance to aluminum in root hair cells. The polypeptide is J domain-containing protein required for chloroplast accumulation response 1 (JAC1) (Arabidopsis thaliana (Mouse-ear cress)).